The primary structure comprises 236 residues: DNA repair protein RecO (236 aa).

Belongs to the RecO family.

Involved in DNA repair and RecF pathway recombination. The chain is DNA repair protein RecO from Haemophilus influenzae (strain PittGG).